Here is a 252-residue protein sequence, read N- to C-terminus: MNTFLIIDGLNLVRRIHAAQPNENDVNGLDARVASACKKLLKYHQPSHVAIVWDGDATSWRKTLYEDYKKGRKPMPEALAKSLPALKTHLSELNVNSIDAEAEADDVIATLATKLVNNQGKAIIVSTDKGFTQLTHTNIERWDHFNQAYITIEQREEKLGVERTQFIDYLALAGDSGNKIPGVPGIGPKSASELLKIFRSLSNLYGSLEQVGAKQAKKLEEGKQMARLSYKLVQLQTEIPLNANLSQFRLPQ.

Asp-105 contributes to the Mg(2+) binding site. The 5'-3' exonuclease domain maps to 162 to 250 (ERTQFIDYLA…LNANLSQFRL (89 aa)). The K(+) site is built by Leu-172, Ala-173, Pro-181, Val-183, and Ile-186. Positions 185 to 190 (GIGPKS) are interaction with DNA.

Belongs to the Xni family. The cofactor is Mg(2+). K(+) serves as cofactor.

In terms of biological role, has flap endonuclease activity. During DNA replication, flap endonucleases cleave the 5'-overhanging flap structure that is generated by displacement synthesis when DNA polymerase encounters the 5'-end of a downstream Okazaki fragment. The sequence is that of Flap endonuclease Xni from Shewanella woodyi (strain ATCC 51908 / MS32).